Here is a 901-residue protein sequence, read N- to C-terminus: Protein translocase subunit SecA (901 aa).

ATP contacts are provided by residues glutamine 87, 105–109 (GEGKT), and aspartate 512. The segment at 852–901 (AQMQQLSHQSDDEAAAEDLAAQTGERKVGRNDPCPCGSGKKYKQCHGRLS) is disordered. The Zn(2+) site is built by cysteine 885, cysteine 887, cysteine 896, and histidine 897. Residues 891-901 (KKYKQCHGRLS) are compositionally biased toward basic residues.

Belongs to the SecA family. In terms of assembly, monomer and homodimer. Part of the essential Sec protein translocation apparatus which comprises SecA, SecYEG and auxiliary proteins SecDF-YajC and YidC. The cofactor is Zn(2+).

It localises to the cell inner membrane. Its subcellular location is the cytoplasm. The catalysed reaction is ATP + H2O + cellular proteinSide 1 = ADP + phosphate + cellular proteinSide 2.. Functionally, part of the Sec protein translocase complex. Interacts with the SecYEG preprotein conducting channel. Has a central role in coupling the hydrolysis of ATP to the transfer of proteins into and across the cell membrane, serving both as a receptor for the preprotein-SecB complex and as an ATP-driven molecular motor driving the stepwise translocation of polypeptide chains across the membrane. This Klebsiella pneumoniae (strain 342) protein is Protein translocase subunit SecA.